Here is a 260-residue protein sequence, read N- to C-terminus: MRNASGPRGPSLATLLFLLLIPEGGCERIIGGDTVVPHSRPYMALLKLSSNTICAGALIEKNWVLTAAHCNVGKRSKFILGAHSINKEPEQQILTVKKAFPYPCYDEYTREGDLQLVRLKKKATVNRNVAILHLPKKGDDVKPGTRCRVAGWGRFGNKSAPSETLREVNITVIDRKICNDEKHYNFHPVIGLNMICAGDLRGGKDSCNGDSGSPLLCDGILRGITSFGGEKCGDRRWPGVYTFLSDKHLNWIKKIMKGSV.

The signal sequence occupies residues 1 to 26 (MRNASGPRGPSLATLLFLLLIPEGGC). The propeptide at 27 to 28 (ER) is activation peptide. The region spanning 29 to 257 (IIGGDTVVPH…HLNWIKKIMK (229 aa)) is the Peptidase S1 domain. A disulfide bridge links cysteine 54 with cysteine 70. Active-site charge relay system residues include histidine 69 and aspartate 113. Intrachain disulfides connect cysteine 147-cysteine 217, cysteine 178-cysteine 196, and cysteine 207-cysteine 232. N-linked (GlcNAc...) asparagine glycosylation is found at asparagine 157 and asparagine 169. The active-site Charge relay system is the serine 211.

The protein belongs to the peptidase S1 family. Granzyme subfamily. As to quaternary structure, homodimer; disulfide-linked. Interacts with APEX1. Found in cytotoxic lymphocytes and in normal lymphoid tissues such as thymus and spleen. As to expression, more abundant in lymphoid tissues than isoform HF2.

It localises to the secreted. Its subcellular location is the cytoplasmic granule. The enzyme catalyses Hydrolysis of proteins, including fibronectin, type IV collagen and nucleolin. Preferential cleavage: -Arg-|-Xaa-, -Lys-|-Xaa- &gt;&gt; -Phe-|-Xaa- in small molecule substrates.. Abundant protease in the cytosolic granules of cytotoxic T-cells and NK-cells which activates caspase-independent pyroptosis when delivered into the target cell through the immunological synapse. It cleaves after Lys or Arg. Cleaves APEX1 after 'Lys-31' and destroys its oxidative repair activity. Cleaves the nucleosome assembly protein SET after 'Lys-189', which disrupts its nucleosome assembly activity and allows the SET complex to translocate into the nucleus to nick and degrade the DNA. The polypeptide is Granzyme A (Gzma) (Mus musculus (Mouse)).